A 668-amino-acid polypeptide reads, in one-letter code: MPMDEGDAQGSLLLEWKQLNYYVPAQEQSNYSFWNECRKQRELGILHDVSGHLKTGDLIAILGGSGAGKTTLLAAISQRLRGNLTGDVVLNGMAMERDQMTRISSFLREFEINVKTFTAYDDLYFMSHFKMHRRTTKSEKRQAVSDLLLAVGLRDAAHTRIQQLSGGERKRLSLAEELITDPIFLFCDEPTTGLDSFSAYTVIKTLRHLCTRRRIAKHSLTQVYGEDSFATPSDNGSSGSNSIEMEIVDNSHESLLQAMKELPTLGVLNNSPNGTQKKAAICSIHQPTSDIFELFTHIILMDGGRIVYQGRTEQAAKFFTEGFMQPKNCNPADFYLKTLADGQGSKNAGELLRAKYEHETDGLYSGSWLLARNYSGDYMKHVQNFKKIRWIYQVYLLVIRFMTEDLANIRSGLIGFGFFMTTAVTLSLMYSGVGGLTQRTVQDVGGSIFMLSNEMIFTFSYGVTYIFPAALPIIRREVAEGTYSLSAYYVALVLSFVPVAFFKGYMFLSVIYASIYYTRGFLLYITMGFLMSLSAIAAVGYGVFLSSLFETDKMASECAAPFDLIFLIFGGTYMNVDSVPLLKYFSLFFYSNEALMYNFWIDIDNIACXVNDEHPCCQTGLEVLQQASFRTADYTFWLDCASLLVVALVFHIVSFTLIRRYINRSGYY.

The Cytoplasmic portion of the chain corresponds to 1–412; sequence MPMDEGDAQG…TEDLANIRSG (412 aa). The ABC transporter domain occupies 31-328; the sequence is YSFWNECRKQ…FTEGFMQPKN (298 aa). ATP is bound at residue 63-70; it reads GGSGAGKT. The helical transmembrane segment at 413-433 threads the bilayer; sequence LIGFGFFMTTAVTLSLMYSGV. Residues 434-453 lie on the Extracellular side of the membrane; it reads GGLTQRTVQDVGGSIFMLSN. Residues 454–474 form a helical membrane-spanning segment; sequence EMIFTFSYGVTYIFPAALPII. Residues 475–490 are Cytoplasmic-facing; the sequence is RREVAEGTYSLSAYYV. The helical transmembrane segment at 491–511 threads the bilayer; sequence ALVLSFVPVAFFKGYMFLSVI. Residues 512 to 524 lie on the Extracellular side of the membrane; it reads YASIYYTRGFLLY. A helical membrane pass occupies residues 525-545; the sequence is ITMGFLMSLSAIAAVGYGVFL. Topologically, residues 546-561 are cytoplasmic; that stretch reads SSLFETDKMASECAAP. Residues 562-582 form a helical membrane-spanning segment; the sequence is FDLIFLIFGGTYMNVDSVPLL. Topologically, residues 583-637 are extracellular; that stretch reads KYFSLFFYSNEALMYNFWIDIDNIACXVNDEHPCCQTGLEVLQQASFRTADYTFW. Residues 638 to 658 traverse the membrane as a helical segment; sequence LDCASLLVVALVFHIVSFTLI. Topologically, residues 659-668 are cytoplasmic; the sequence is RRYINRSGYY.

The protein belongs to the ABC transporter superfamily. ABCG family. Eye pigment precursor importer (TC 3.A.1.204) subfamily. As to quaternary structure, may form a heterodimer with w/white. Expressed in eyes.

The protein localises to the membrane. It catalyses the reaction guanine(out) + ATP + H2O = guanine(in) + ADP + phosphate + H(+). The enzyme catalyses riboflavin(in) + ATP + H2O = riboflavin(out) + ADP + phosphate + H(+). The catalysed reaction is (6S)-5,6,7,8-tetrahydrofolate(out) + ATP + H2O = (6S)-5,6,7,8-tetrahydrofolate(in) + ADP + phosphate + H(+). Functionally, ATP-dependent transporter of the ATP-binding cassette (ABC) family which transports various molecules including bioamines, neurotransmitters and metabolic intermediates. In the eye and probably in association with w/white, required for the transport of the eye red pigment precursor, guanine, into pigment cell granules. In Malpighian tubules, involved in guanine uptake. Probably in association with w/white, involved in aging-induced intestinal stem cell proliferation in the midgut by regulating tetrahydrofolate transport. This is Protein brown from Drosophila virilis (Fruit fly).